The chain runs to 158 residues: NAD(P)H-quinone oxidoreductase subunit O, chloroplastic (158 aa).

Residues 1–38 constitute a chloroplast transit peptide; sequence MAFSATVSQLSSLSTISSSLPISSRRLPHRSLPQFTVK. Residues 33-70 are disordered; the sequence is PQFTVKAEAEKEKQSTQGKSDGEASPAATKTPKTLPKK. Over residues 56–70 the composition is skewed to low complexity; sequence ASPAATKTPKTLPKK.

Belongs to the NDH complex subunit O family. Part of the chloroplast NDH complex, composed of a mixture of chloroplast and nucleus encoded subunits. Component of the NDH subcomplex A, at least composed of ndhH, ndhI, ndhJ, ndhK, ndhL, ndhM, ndhN and ndhO.

The protein localises to the plastid. Its subcellular location is the chloroplast thylakoid membrane. The catalysed reaction is a plastoquinone + NADH + (n+1) H(+)(in) = a plastoquinol + NAD(+) + n H(+)(out). It catalyses the reaction a plastoquinone + NADPH + (n+1) H(+)(in) = a plastoquinol + NADP(+) + n H(+)(out). Functionally, NDH shuttles electrons from NAD(P)H:plastoquinone, via FMN and iron-sulfur (Fe-S) centers, to quinones in the photosynthetic chain and possibly in a chloroplast respiratory chain. The immediate electron acceptor for the enzyme in this species is believed to be plastoquinone. Couples the redox reaction to proton translocation, and thus conserves the redox energy in a proton gradient. The polypeptide is NAD(P)H-quinone oxidoreductase subunit O, chloroplastic (Arabidopsis thaliana (Mouse-ear cress)).